A 301-amino-acid polypeptide reads, in one-letter code: Protein translocase subunit SecF (301 aa).

Transmembrane regions (helical) follow at residues 17-37, 137-157, 163-183, 190-210, 239-261, and 272-292; these read YIAL…IFQI, DALF…AIRF, IGAT…FYIL, IFIS…VVVF, LSRT…FFGG, and ILGI…VVLL.

It belongs to the SecD/SecF family. SecF subfamily. In terms of assembly, forms a complex with SecD. Part of the essential Sec protein translocation apparatus which comprises SecA, SecYEG and auxiliary proteins SecDF. Other proteins may also be involved.

Its subcellular location is the cell inner membrane. Functionally, part of the Sec protein translocase complex. Interacts with the SecYEG preprotein conducting channel. SecDF uses the proton motive force (PMF) to complete protein translocation after the ATP-dependent function of SecA. The polypeptide is Protein translocase subunit SecF (Thermodesulfovibrio yellowstonii (strain ATCC 51303 / DSM 11347 / YP87)).